Reading from the N-terminus, the 227-residue chain is Uracil-DNA glycosylase (227 aa).

Asp65 functions as the Proton acceptor in the catalytic mechanism.

The protein belongs to the uracil-DNA glycosylase (UDG) superfamily. UNG family.

It localises to the cytoplasm. It carries out the reaction Hydrolyzes single-stranded DNA or mismatched double-stranded DNA and polynucleotides, releasing free uracil.. Excises uracil residues from the DNA which can arise as a result of misincorporation of dUMP residues by DNA polymerase or due to deamination of cytosine. This chain is Uracil-DNA glycosylase, found in Buchnera aphidicola subsp. Cinara cedri (strain Cc).